Here is a 234-residue protein sequence, read N- to C-terminus: uncharacterized protein (234 aa).

The next 2 helical transmembrane spans lie at 20-40 and 176-196; these read LILL…FKVI and VMAF…LHFL.

The protein belongs to the CpsC/CapA family.

Its subcellular location is the cell membrane. This is an uncharacterized protein from Bacillus subtilis (strain 168).